The sequence spans 185 residues: Lysozyme g (185 aa).

Glu73 is an active-site residue.

Belongs to the glycosyl hydrolase 23 family.

It catalyses the reaction Hydrolysis of (1-&gt;4)-beta-linkages between N-acetylmuramic acid and N-acetyl-D-glucosamine residues in a peptidoglycan and between N-acetyl-D-glucosamine residues in chitodextrins.. The chain is Lysozyme g from Cyprinus carpio (Common carp).